The primary structure comprises 242 residues: Segregation and condensation protein A (242 aa).

The protein belongs to the ScpA family. As to quaternary structure, component of a cohesin-like complex composed of ScpA, ScpB and the Smc homodimer, in which ScpA and ScpB bind to the head domain of Smc. The presence of the three proteins is required for the association of the complex with DNA.

The protein resides in the cytoplasm. In terms of biological role, participates in chromosomal partition during cell division. May act via the formation of a condensin-like complex containing Smc and ScpB that pull DNA away from mid-cell into both cell halves. This chain is Segregation and condensation protein A, found in Streptococcus pneumoniae serotype 4 (strain ATCC BAA-334 / TIGR4).